Consider the following 63-residue polypeptide: Synergistic-type venom protein C9S3, chain 1 (63 aa).

Cystine bridges form between Cys-3–Cys-24, Cys-17–Cys-42, and Cys-46–Cys-57.

This sequence belongs to the three-finger toxin family. Short-chain subfamily. Aminergic toxin sub-subfamily. Heterodimer of C9S3 chain 1 and chain 2 (AC P01409); disulfide-linked. In terms of tissue distribution, expressed by the venom gland.

It is found in the secreted. Its function is as follows. This protein shows a synergetic toxic effect in that it enhances the toxicity of other toxins. This Dendroaspis angusticeps (Eastern green mamba) protein is Synergistic-type venom protein C9S3, chain 1.